Reading from the N-terminus, the 466-residue chain is Chromosomal replication initiator protein DnaA (466 aa).

The tract at residues 1–86 (MSLSLWQQCL…EVGTKPVTQT (86 aa)) is domain I, interacts with DnaA modulators. Positions 86–129 (TLKTPVHNVVAPTQTTTAQPQRVAPAARSGWDNVPAPAEPTYRS) are domain II. The interval 130–346 (NVNVKHTFDN…GALNRVIANA (217 aa)) is domain III, AAA+ region. ATP-binding residues include Gly174, Gly176, Lys177, and Thr178. Residues 347–466 (NFTGRAITID…FSNLIRTLSS (120 aa)) are domain IV, binds dsDNA.

This sequence belongs to the DnaA family. Oligomerizes as a right-handed, spiral filament on DNA at oriC.

The protein resides in the cytoplasm. Its function is as follows. Plays an essential role in the initiation and regulation of chromosomal replication. ATP-DnaA binds to the origin of replication (oriC) to initiate formation of the DNA replication initiation complex once per cell cycle. Binds the DnaA box (a 9 base pair repeat at the origin) and separates the double-stranded (ds)DNA. Forms a right-handed helical filament on oriC DNA; dsDNA binds to the exterior of the filament while single-stranded (ss)DNA is stabiized in the filament's interior. The ATP-DnaA-oriC complex binds and stabilizes one strand of the AT-rich DNA unwinding element (DUE), permitting loading of DNA polymerase. After initiation quickly degrades to an ADP-DnaA complex that is not apt for DNA replication. Binds acidic phospholipids. The protein is Chromosomal replication initiator protein DnaA of Salmonella enteritidis PT4 (strain P125109).